The following is a 247-amino-acid chain: Calpain small subunit 2 (247 aa).

Ca(2+) contacts are provided by Ala-88, Asp-91, Glu-93, Asp-131, Asp-133, Thr-135, Lys-137, Glu-142, Asp-161, Asp-163, Ser-165, and Asp-204. EF-hand domains are found at residues 118–151 (FSLD…NNIK), 148–183 (NNIK…AGFQ), 184–212 (LNEQ…ISCL), and 213–247 (VRLD…TMYS).

As to quaternary structure, heterodimer of a large (catalytic) and a small (regulatory) subunit.

The protein resides in the cytoplasm. It localises to the cell membrane. Functionally, calcium-regulated non-lysosomal thiol-protease which catalyzes limited proteolysis of substrates involved in cytoskeletal remodeling and signal transduction. This small subunit may act as a tissue-specific chaperone of the large subunit, possibly by helping it fold into its correct conformation for activity. The chain is Calpain small subunit 2 (Capns2) from Mus musculus (Mouse).